Reading from the N-terminus, the 365-residue chain is Anhydro-N-acetylmuramic acid kinase (365 aa).

12–19 (GTSMDGMD) contributes to the ATP binding site.

The protein belongs to the anhydro-N-acetylmuramic acid kinase family.

The enzyme catalyses 1,6-anhydro-N-acetyl-beta-muramate + ATP + H2O = N-acetyl-D-muramate 6-phosphate + ADP + H(+). It participates in amino-sugar metabolism; 1,6-anhydro-N-acetylmuramate degradation. Its pathway is cell wall biogenesis; peptidoglycan recycling. In terms of biological role, catalyzes the specific phosphorylation of 1,6-anhydro-N-acetylmuramic acid (anhMurNAc) with the simultaneous cleavage of the 1,6-anhydro ring, generating MurNAc-6-P. Is required for the utilization of anhMurNAc either imported from the medium or derived from its own cell wall murein, and thus plays a role in cell wall recycling. This Pseudomonas paraeruginosa (strain DSM 24068 / PA7) (Pseudomonas aeruginosa (strain PA7)) protein is Anhydro-N-acetylmuramic acid kinase.